A 117-amino-acid chain; its full sequence is Large ribosomal subunit protein bL19 (117 aa).

The protein belongs to the bacterial ribosomal protein bL19 family.

Its function is as follows. This protein is located at the 30S-50S ribosomal subunit interface and may play a role in the structure and function of the aminoacyl-tRNA binding site. The chain is Large ribosomal subunit protein bL19 from Shewanella piezotolerans (strain WP3 / JCM 13877).